We begin with the raw amino-acid sequence, 797 residues long: uncharacterized protein (797 aa).

A compositionally biased stretch (basic and acidic residues) spans 394–403; it reads SDDRDDRDKD. Positions 394 to 724 are disordered; it reads SDDRDDRDKD…GTKDKEGNAN (331 aa). The segment covering 404–713 has biased composition (acidic residues); it reads EYELENEEYN…GEDEGEDEGD (310 aa).

This sequence belongs to the herpesviridae BBRF2 family.

This is an uncharacterized protein from Saimiriine herpesvirus 2 (strain 11) (SaHV-2).